Consider the following 342-residue polypeptide: Alpha-tocopherol transfer protein-like (342 aa).

The tract at residues methionine 1 to tyrosine 31 is disordered. Residues leucine 8–glutamate 19 show a composition bias toward polar residues. The CRAL-TRIO domain occupies lysine 117–aspartate 282.

May act as a protein that binds a hydrophobic ligand. This chain is Alpha-tocopherol transfer protein-like (TTPAL), found in Pongo abelii (Sumatran orangutan).